A 192-amino-acid chain; its full sequence is Shikimate kinase (192 aa).

32–37 (GAGKSA) contacts ATP. Residue S36 coordinates Mg(2+). Substrate is bound by residues D54, R78, and G100. ATP is bound at residue R138. R157 is a binding site for substrate.

This sequence belongs to the shikimate kinase family. As to quaternary structure, monomer. It depends on Mg(2+) as a cofactor.

It localises to the cytoplasm. It carries out the reaction shikimate + ATP = 3-phosphoshikimate + ADP + H(+). It participates in metabolic intermediate biosynthesis; chorismate biosynthesis; chorismate from D-erythrose 4-phosphate and phosphoenolpyruvate: step 5/7. Its function is as follows. Catalyzes the specific phosphorylation of the 3-hydroxyl group of shikimic acid using ATP as a cosubstrate. This is Shikimate kinase from Rhizobium meliloti (strain 1021) (Ensifer meliloti).